The chain runs to 169 residues: Disulfide bond formation protein B (169 aa).

At 1–13 the chain is on the cytoplasmic side; that stretch reads MQALNHFSRIRLS. Residues 14–30 form a helical membrane-spanning segment; sequence WFLLLLCIIFFEASALT. Topologically, residues 31-48 are periplasmic; sequence FQHIMKLPPCVMCIYERV. A disulfide bridge connects residues C40 and C43. The chain crosses the membrane as a helical span at residues 49-64; that stretch reads AMMGIGGAAIIGLLNP. Residues 65-71 lie on the Cytoplasmic side of the membrane; it reads NNLIIRW. The helical transmembrane segment at 72 to 89 threads the bilayer; it reads CGFIAWGISAGWGLKLAL. The Periplasmic segment spans residues 90 to 144; sequence EHVDFQLNPSPFSTCDLFVTFPSWAPLNKWAPWMFEAYGDCSKIVWQFLTLTMPQ. A disulfide bond links C104 and C130. The chain crosses the membrane as a helical span at residues 145 to 163; it reads WLVIIFAGNLIALAIFVIA. Topologically, residues 164-169 are cytoplasmic; the sequence is QFFNKK.

It belongs to the DsbB family.

The protein localises to the cell inner membrane. Functionally, required for disulfide bond formation in some periplasmic proteins. Acts by oxidizing the DsbA protein. This Aliivibrio fischeri (strain ATCC 700601 / ES114) (Vibrio fischeri) protein is Disulfide bond formation protein B.